The primary structure comprises 1408 residues: MMISRGLFGWSPPHMQPLTPVSEVSEPPESPSPYLDPGAESGGGTGTAAALAEADEEMDDQDELEPPPAAVPFSQLFACADRFDWVLMIVGSVAAAAHGTALIVYLHYFAKIVDVLAFSNDSSQQRSEHQFDRLVQLSLTIVYIAGGVFISGWIEVSCWILTGERQTAVIRSKYVQVLLNQDMSFFDTYGNNGDIVSQVLSDVLLIQSALSEKVGNYIHNMATFISGLVIGFVNCWEIALITLATGPFIVAAGGISNIFLHRLAENIQDAYAEAAGIAEQAISYIRTLYAFTNETLAKYSYATSLQATLRYGILISLVQGLGLGFTYGLAICSCALQLWIGRFFVHNGRANGGEIIAALFAVILSGLGLNQAATNFYSFDQGRIAAYRLFEMITRSSSVANQEGAVLASVQGNIEFRNVYFSYLSRPEIPILSGFYLTVPAKKAVALVGRNGSGKSSIIPLMERFYDPTLGEVLLDGENIKNLKLEWLRSQIGLVTQEPALLSLSIRENIAYGRDATLDQIEEAAKNAHAHTFISSLEKGYETQVGRAGLAMTEEQKIKLSIARAVLLNPTILLLDEVTGGLDFEAERIVQEALDLLMLGRSTIIIARRLSLIKNADYIAVMEEGQLVEMGTHDELINLGGLYAELLKCEEATKLPRRMPVRNYKESAVFEVERDSSAGCGVQEPSSPKMIKSPSLQRGSGVFRPQELCFDTEESPKAHSPASEKTGEDGMSLDCADKEPTIKRQDSFEMRLPHLPKVDVQCPQQKSNGSEPESPVSPLLTSDPKNERSHSQTFSRPLSSPDDTKANGKASKDAQHKESPSFWRLAQLSFPEWLYAVLGSLGAAIFGSFNPLLAYVIALVVTEYYKSKGGHLREEVDKWCLIIACMGIVTVVANFLQHFYFGIMGEKMTERVRRMMFSAMLRNEVGWFDDEENSPDTLSMRLANDATFVRAAFSNRLSIFIQDSFAVIVALLIGLLLGWRLALVALATLPILTLSAIAQKLWLAGFSKGIQEMHRKASLVLEDAVRNIYTVVAFCAGNKVMELYRMQLQRILRQSYLHGMAIGFAFGFSQFLLFACNALLLWCTALSVNRGYMKLSTAITEYMVFSFATFALVEPFGLAPYILKRRKSLISVFEIVDRVPTIEPDDNSALKPPNVYGSIELKNVDFCYPTRPEILVLSNFSLKISGGQTVAVVGVSGSGKSTIISLVERYYDPVAGQVLLDGRDLKLYNLRWLRSHMGLVQQEPIIFSTTIRENIIYARHNASEAEMKEAARIANAHHFISSLPHGYDTHIGMRGVELTPGQKQRIAIARVVLKNAPIILIDEASSSIESESSRVVQEALDTLIMGNKTTILIAHRAAMMRHVDNIVVLNGGRIVEEGTHDSLAAKNGLYVRLMQPHFGKGLRQHRLI.

Positions 14-49 (HMQPLTPVSEVSEPPESPSPYLDPGAESGGGTGTAA) are disordered. Positions 20 to 39 (PVSEVSEPPESPSPYLDPGA) are enriched in low complexity. The chain crosses the membrane as a helical span at residues 86 to 106 (VLMIVGSVAAAAHGTALIVYL). Positions 88 to 381 (MIVGSVAAAA…AATNFYSFDQ (294 aa)) constitute an ABC transmembrane type-1 1 domain. An N-linked (GlcNAc...) asparagine glycan is attached at asparagine 120. 3 helical membrane-spanning segments follow: residues 141-161 (IVYI…CWIL), 214-233 (VGNY…IGFV), and 238-260 (IALI…NIFL). A glycan (N-linked (GlcNAc...) asparagine) is linked at asparagine 293. A run of 2 helical transmembrane segments spans residues 312-332 (GILI…LAIC) and 353-373 (GEII…NQAA). One can recognise an ABC transporter 1 domain in the interval 414–649 (IEFRNVYFSY…GGLYAELLKC (236 aa)). 449–456 (GRNGSGKS) is an ATP binding site. The N-linked (GlcNAc...) asparagine glycan is linked to asparagine 451. Disordered stretches follow at residues 676–735 (SSAG…SLDC) and 752–816 (LPHL…DAQH). Over residues 762–771 (CPQQKSNGSE) the composition is skewed to polar residues. N-linked (GlcNAc...) asparagine glycosylation is present at asparagine 768. Residues 802-816 (DDTKANGKASKDAQH) show a composition bias toward basic and acidic residues. The ABC transmembrane type-1 2 domain occupies 836–1124 (AVLGSLGAAI…PFGLAPYILK (289 aa)). The next 6 helical transmembrane spans lie at 841 to 861 (LGAA…ALVV), 881 to 901 (LIIA…HFYF), 959 to 979 (IFIQ…LLGW), 983 to 1003 (LVAL…KLWL), 1062 to 1082 (IGFA…LLLW), and 1103 to 1123 (MVFS…PYIL). Positions 1159–1396 (IELKNVDFCY…NGLYVRLMQP (238 aa)) constitute an ABC transporter 2 domain. N-linked (GlcNAc...) asparagine glycosylation occurs at asparagine 1179. 1194–1201 (GVSGSGKS) provides a ligand contact to ATP. Residues asparagine 1261 and asparagine 1347 are each glycosylated (N-linked (GlcNAc...) asparagine).

This sequence belongs to the ABC transporter superfamily. ABCB family. Multidrug resistance exporter (TC 3.A.1.201) subfamily. As to expression, expressed in aerial tissues.

It is found in the membrane. It catalyses the reaction (indol-3-yl)acetate(in) + ATP + H2O = (indol-3-yl)acetate(out) + ADP + phosphate + H(+). In terms of biological role, probable auxin efflux transporter that contributes, together with ABCB6 and in a FKBP42/TWD1-dependent manner, to the regulation of leaf position and morphology, internode distribution, roots development, and inflorescence organization, probably by modulating auxin repartition. This Arabidopsis thaliana (Mouse-ear cress) protein is ABC transporter B family member 20.